The sequence spans 388 residues: Spermosin (388 aa).

A signal peptide spans 1–22 (MAAINVIFISGAIALFALTGSC). Residues 29 to 49 (FTNKPYATQNPYSPPQTNQPT) show a composition bias toward polar residues. The disordered stretch occupies residues 29–98 (FTNKPYATQN…SENSESENSE (70 aa)). The span at 54–64 (QPGPAPTPAPY) shows a compositional bias: pro residues. 5 disulfides stabilise this stretch: Cys-116–Cys-251, Cys-163–Cys-179, Cys-265–Cys-330, Cys-295–Cys-310, and Cys-320–Cys-349. Residues 130-372 (IVGGAEAVPN…NLEWLCCYMP (243 aa)) enclose the Peptidase S1 domain. Catalysis depends on charge relay system residues His-178 and Asp-231. Ser-324 serves as the catalytic Charge relay system.

The protein belongs to the peptidase S1 family. In terms of assembly, heterodimer of a heavy chain and either an L1 light chain or an L2 light chain linked by a disulfide bond. As to expression, detected in sperm, but not in unfertilized eggs (at protein level). Expressed in gonad, but not in hepatopancreas, intestine or branchial basket.

It is found in the secreted. The catalysed reaction is Hydrolyzes arginyl bonds, preferably with Pro in the P2 position.. Inhibited by peptidyl-argininals with Pro in the P2 position, diisopropyl fluorophosphate, phenylmethanesulfonyl fluoride, leupeptin, antipain, soybean trypsin inhibitor, aprotinin, ovomucoid, valyl-prolyl-arginyl-chloromethane, glycyl-valyl-arginyl-chloromethane, p-aminobenzamidine, benzamidine, zinc chloride and mercuric chloride. Functionally, trypsin-like protease with a narrow substrate specificity. Preferentially hydrolyzes substrates with Pro in the P2 position and Val in the P3 position. Plays a role in fertilization. In Halocynthia roretzi (Sea squirt), this protein is Spermosin.